The chain runs to 284 residues: D-tagatose-1,6-bisphosphate aldolase subunit GatY (284 aa).

Residue Asp-82 is the Proton donor of the active site. Residues His-83 and His-180 each coordinate Zn(2+). Gly-181 is a binding site for dihydroxyacetone phosphate. His-208 contacts Zn(2+). Dihydroxyacetone phosphate is bound by residues 209–211 (GAS) and 230–233 (NVAT).

The protein belongs to the class II fructose-bisphosphate aldolase family. TagBP aldolase GatY subfamily. In terms of assembly, forms a complex with GatZ. Requires Zn(2+) as cofactor.

It carries out the reaction D-tagatofuranose 1,6-bisphosphate = D-glyceraldehyde 3-phosphate + dihydroxyacetone phosphate. The protein operates within carbohydrate metabolism; D-tagatose 6-phosphate degradation; D-glyceraldehyde 3-phosphate and glycerone phosphate from D-tagatose 6-phosphate: step 2/2. Catalytic subunit of the tagatose-1,6-bisphosphate aldolase GatYZ, which catalyzes the reversible aldol condensation of dihydroxyacetone phosphate (DHAP or glycerone-phosphate) with glyceraldehyde 3-phosphate (G3P) to produce tagatose 1,6-bisphosphate (TBP). Requires GatZ subunit for full activity and stability. Is involved in the catabolism of galactitol. This is D-tagatose-1,6-bisphosphate aldolase subunit GatY from Salmonella typhi.